A 2078-amino-acid chain; its full sequence is Autophagy-related protein 2 homolog B (2078 aa).

The region spanning 13–108 is the Chorein N-terminal domain; that stretch reads ACRYLLQRYL…EMVFRPRPRP (96 aa). Ser-255 and Ser-379 each carry phosphoserine. Residues 473–495 are disordered; the sequence is GSTFPSNLVHPTPLQKTSLPSRS. Residues 486 to 495 show a composition bias toward polar residues; it reads LQKTSLPSRS. A phosphoserine mark is found at Ser-497, Ser-840, Ser-886, Ser-899, and Ser-1008. A disordered region spans residues 868 to 888; sequence EEEENDGHYQEEEEGGAHSLK. Basic and acidic residues predominate over residues 873 to 888; sequence DGHYQEEEEGGAHSLK. Tyr-1012 carries the post-translational modification Phosphotyrosine. Phosphoserine occurs at positions 1016 and 1018. A Phosphothreonine modification is found at Thr-1022. The interval 1375-1405 is disordered; the sequence is ADMKPGAFQRRSKVDSSGRSSSRGPVLPEAD. Phosphoserine is present on Ser-1526.

The protein belongs to the ATG2 family. In terms of assembly, interacts with WDR45/WIPI4.

It localises to the preautophagosomal structure membrane. Its subcellular location is the lipid droplet. The protein localises to the endoplasmic reticulum membrane. The enzyme catalyses a 1,2-diacyl-sn-glycero-3-phospho-L-serine(in) = a 1,2-diacyl-sn-glycero-3-phospho-L-serine(out). It catalyses the reaction a 1,2-diacyl-sn-glycero-3-phosphoethanolamine(in) = a 1,2-diacyl-sn-glycero-3-phosphoethanolamine(out). Functionally, lipid transfer protein required for both autophagosome formation and regulation of lipid droplet morphology and dispersion. Tethers the edge of the isolation membrane (IM) to the endoplasmic reticulum (ER) and mediates direct lipid transfer from ER to IM for IM expansion. Binds to the ER exit site (ERES), which is the membrane source for autophagosome formation, and extracts phospholipids from the membrane source and transfers them to ATG9 (ATG9A or ATG9B) to the IM for membrane expansion. Lipid transfer activity is enhanced by WDR45/WIPI4, which promotes ATG2B-association with phosphatidylinositol 3-monophosphate (PI3P)-containing membranes. The sequence is that of Autophagy-related protein 2 homolog B from Homo sapiens (Human).